The sequence spans 249 residues: Deoxyribose-phosphate aldolase (249 aa).

Catalysis depends on Asp109, which acts as the Proton donor/acceptor. Lys171 functions as the Schiff-base intermediate with acetaldehyde in the catalytic mechanism. The Proton donor/acceptor role is filled by Lys200.

The protein belongs to the DeoC/FbaB aldolase family. DeoC type 1 subfamily.

It is found in the cytoplasm. The catalysed reaction is 2-deoxy-D-ribose 5-phosphate = D-glyceraldehyde 3-phosphate + acetaldehyde. It functions in the pathway carbohydrate degradation; 2-deoxy-D-ribose 1-phosphate degradation; D-glyceraldehyde 3-phosphate and acetaldehyde from 2-deoxy-alpha-D-ribose 1-phosphate: step 2/2. Its function is as follows. Catalyzes a reversible aldol reaction between acetaldehyde and D-glyceraldehyde 3-phosphate to generate 2-deoxy-D-ribose 5-phosphate. In Klebsiella pneumoniae subsp. pneumoniae (strain ATCC 700721 / MGH 78578), this protein is Deoxyribose-phosphate aldolase.